A 448-amino-acid polypeptide reads, in one-letter code: Beta-glucosidase A (448 aa).

Residue Glu-166 is the Proton donor of the active site. Catalysis depends on Glu-355, which acts as the Nucleophile.

This sequence belongs to the glycosyl hydrolase 1 family.

The catalysed reaction is Hydrolysis of terminal, non-reducing beta-D-glucosyl residues with release of beta-D-glucose.. It functions in the pathway glycan metabolism; cellulose degradation. This chain is Beta-glucosidase A (bglA), found in Acetivibrio thermocellus (strain ATCC 27405 / DSM 1237 / JCM 9322 / NBRC 103400 / NCIMB 10682 / NRRL B-4536 / VPI 7372) (Clostridium thermocellum).